A 393-amino-acid chain; its full sequence is Putative B3 domain-containing protein Os06g0632500 (393 aa).

3 consecutive DNA-binding regions (TF-B3) follow at residues 27 to 123 (LSVP…FDPG), 141 to 238 (RPRF…FLQN), and 316 to 393 (NSFT…VQRR).

The protein localises to the nucleus. This Oryza sativa subsp. japonica (Rice) protein is Putative B3 domain-containing protein Os06g0632500.